The chain runs to 146 residues: Hemoglobin subunit beta (146 aa).

An N-acetylvaline modification is found at valine 1. Residues 2–146 (HLTNEEKTAV…VATALAHKYH (145 aa)) form the Globin domain. A Phosphoserine modification is found at serine 44. Lysine 59 carries the N6-acetyllysine modification. Histidine 63 lines the heme b pocket. Position 82 is an N6-acetyllysine (lysine 82). Residue histidine 92 participates in heme b binding. Cysteine 93 carries the S-nitrosocysteine modification. Lysine 144 carries the N6-acetyllysine modification.

This sequence belongs to the globin family. As to quaternary structure, heterotetramer of two alpha chains and two beta chains. Red blood cells.

In terms of biological role, involved in oxygen transport from the lung to the various peripheral tissues. This chain is Hemoglobin subunit beta (HBB), found in Lyroderma lyra (Greater Asian false-vampire bat).